The primary structure comprises 327 residues: uncharacterized protein (327 aa).

The chain crosses the membrane as a helical span at residues 13–33 (IICIISIIVLLLIIISLYPHK).

It localises to the membrane. This is an uncharacterized protein from Caenorhabditis elegans.